Consider the following 244-residue polypeptide: tRNA (guanine-N(7)-)-methyltransferase (244 aa).

Over residues 1–10 (MSDTPQSPAQ) the composition is skewed to polar residues. The tract at residues 1–20 (MSDTPQSPAQGSLAEHDEAR) is disordered. Positions 74, 99, 126, and 149 each coordinate S-adenosyl-L-methionine. The active site involves Asp149. Substrate contacts are provided by residues Lys153, Asp185, and 222–225 (TKFE).

It belongs to the class I-like SAM-binding methyltransferase superfamily. TrmB family.

The enzyme catalyses guanosine(46) in tRNA + S-adenosyl-L-methionine = N(7)-methylguanosine(46) in tRNA + S-adenosyl-L-homocysteine. Its pathway is tRNA modification; N(7)-methylguanine-tRNA biosynthesis. Its function is as follows. Catalyzes the formation of N(7)-methylguanine at position 46 (m7G46) in tRNA. In Pseudomonas aeruginosa (strain UCBPP-PA14), this protein is tRNA (guanine-N(7)-)-methyltransferase.